A 98-amino-acid polypeptide reads, in one-letter code: DNA-binding protein Fis (98 aa).

Positions 74 to 93 (QTRAALMLGINRSTLRKKLK) form a DNA-binding region, H-T-H motif.

It belongs to the transcriptional regulatory Fis family. Homodimer.

In terms of biological role, activates ribosomal RNA transcription. Plays a direct role in upstream activation of rRNA promoters. The protein is DNA-binding protein Fis of Buchnera aphidicola subsp. Acyrthosiphon pisum (strain 5A).